The primary structure comprises 137 residues: uncharacterized protein (137 aa).

This is an uncharacterized protein from Mycoplasma genitalium (strain ATCC 33530 / DSM 19775 / NCTC 10195 / G37) (Mycoplasmoides genitalium).